The following is a 505-amino-acid chain: Glycerol kinase (505 aa).

T17 is a binding site for ADP. 3 residues coordinate ATP: T17, T18, and S19. T17 serves as a coordination point for sn-glycerol 3-phosphate. R21 contacts ADP. Residues R87, E88, Y139, and D250 each contribute to the sn-glycerol 3-phosphate site. Residues R87, E88, Y139, D250, and Q251 each contribute to the glycerol site. Positions 272 and 315 each coordinate ADP. The ATP site is built by T272, G315, Q319, and G416. 2 residues coordinate ADP: G416 and N420.

It belongs to the FGGY kinase family.

It catalyses the reaction glycerol + ATP = sn-glycerol 3-phosphate + ADP + H(+). It functions in the pathway polyol metabolism; glycerol degradation via glycerol kinase pathway; sn-glycerol 3-phosphate from glycerol: step 1/1. Its activity is regulated as follows. Inhibited by fructose 1,6-bisphosphate (FBP). Key enzyme in the regulation of glycerol uptake and metabolism. Catalyzes the phosphorylation of glycerol to yield sn-glycerol 3-phosphate. The chain is Glycerol kinase from Azotobacter vinelandii (strain DJ / ATCC BAA-1303).